The sequence spans 337 residues: Endochitinase 37 (337 aa).

A signal peptide spans 1 to 25 (MTRLLDASFLLLPVIASTLFGTASA). The GH18 domain occupies 38 to 337 (KVLQGYWENW…GSKNWTFGDN (300 aa)). The active-site Proton donor is glutamate 160. Asparagine 331 is a glycosylation site (N-linked (GlcNAc...) asparagine).

This sequence belongs to the glycosyl hydrolase 18 family. Chitinase class V subfamily. Monomer.

It localises to the secreted. The catalysed reaction is Random endo-hydrolysis of N-acetyl-beta-D-glucosaminide (1-&gt;4)-beta-linkages in chitin and chitodextrins.. Functionally, secreted chitinase involved in the degradation of chitin, a component of the cell walls of fungi and exoskeletal elements of some animals (including worms and arthropods). Plays a morphogenetic role during apical growth, cell division and differentiation (cell wall morphogenesis). May be involved in the degradation and further assimilation of phytopathogenic fungi, namely mycoparasitism, the major mechanism accounting for the antagonistic activity against phytopathogenic fungi displayed by Trichoderma. The polypeptide is Endochitinase 37 (chit37) (Trichoderma harzianum (Hypocrea lixii)).